The sequence spans 334 residues: DNA polymerase beta (334 aa).

Lys60, Leu62, and Val65 together coordinate K(+). 3 residues coordinate Na(+): Lys60, Leu62, and Val65. Lys72 serves as the catalytic Nucleophile; Schiff-base intermediate with DNA; for 5'-dRP lyase activity. The residue at position 83 (Arg83) is an Omega-N-methylarginine; by PRMT6. Thr101, Val103, and Ile106 together coordinate K(+). Thr101, Val103, and Ile106 together coordinate Na(+). Residue Arg149 coordinates a 2'-deoxyribonucleoside 5'-triphosphate. Arg152 bears the Omega-N-methylarginine; by PRMT6 mark. A 2'-deoxyribonucleoside 5'-triphosphate contacts are provided by Ser180, Arg183, Gly189, and Asp190. A DNA-binding region spans residues Arg183 to Asp192. Mg(2+)-binding residues include Asp190, Asp192, and Asp255.

Belongs to the DNA polymerase type-X family. In terms of assembly, monomer. Mg(2+) is required as a cofactor. In terms of processing, methylation by PRMT6 stimulates the polymerase activity by enhancing DNA binding and processivity. Post-translationally, ubiquitinated: monoubiquitinated by huwe1/arf-bp1. Monoubiquitinated protein is then the target of stub1/chip, which catalyzes polyubiquitination from monoubiquitin, leading to degradation by the proteasome. usp47 mediates the deubiquitination of monoubiquitinated protein, preventing polyubiquitination by STUB1/CHIP and its subsequent degradation.

It localises to the nucleus. The protein localises to the cytoplasm. It catalyses the reaction DNA(n) + a 2'-deoxyribonucleoside 5'-triphosphate = DNA(n+1) + diphosphate. The enzyme catalyses a 5'-end 2'-deoxyribose-2'-deoxyribonucleotide-DNA = (2E,4S)-4-hydroxypenten-2-al-5-phosphate + a 5'-end 5'-phospho-2'-deoxyribonucleoside-DNA + H(+). It carries out the reaction 2'-deoxyribonucleotide-(2'-deoxyribose 5'-phosphate)-2'-deoxyribonucleotide-DNA = a 3'-end 2'-deoxyribonucleotide-(2,3-dehydro-2,3-deoxyribose 5'-phosphate)-DNA + a 5'-end 5'-phospho-2'-deoxyribonucleoside-DNA + H(+). In terms of biological role, repair polymerase that plays a key role in base-excision repair. During this process, the damaged base is excised by specific DNA glycosylases, the DNA backbone is nicked at the abasic site by an apurinic/apyrimidic (AP) endonuclease, and POLB removes 5'-deoxyribose-phosphate from the preincised AP site acting as a 5'-deoxyribose-phosphate lyase (5'-dRP lyase); through its DNA polymerase activity, it adds one nucleotide to the 3' end of the arising single-nucleotide gap. Conducts 'gap-filling' DNA synthesis in a stepwise distributive fashion rather than in a processive fashion as for other DNA polymerases. It is also able to cleave sugar-phosphate bonds 3' to an intact AP site, acting as an AP lyase. The polypeptide is DNA polymerase beta (polb) (Xenopus laevis (African clawed frog)).